Reading from the N-terminus, the 1436-residue chain is ABC transporter C family member 15 (1436 aa).

7 consecutive transmembrane segments (helical) span residues I8–Y28, Y129–L149, I165–S185, F238–L258, L261–I281, I349–S369, and T373–L393. Positions N128–S412 constitute an ABC transmembrane type-1 1 domain. In terms of domain architecture, ABC transporter 1 spans A543–K766. ATP is bound at residue G575–T582. Residues K865 to S1155 form the ABC transmembrane type-1 2 domain. 6 consecutive transmembrane segments (helical) span residues S873–L893, L919–I939, I985–T1005, I1017–V1039, I1101–I1121, and G1127–M1147. The ABC transporter 2 domain occupies I1193–K1426. Position 1227-1234 (G1227–S1234) interacts with ATP.

Belongs to the ABC transporter superfamily. ABCC family. Conjugate transporter (TC 3.A.1.208) subfamily.

The protein localises to the membrane. The chain is ABC transporter C family member 15 (abcC15) from Dictyostelium discoideum (Social amoeba).